Here is a 308-residue protein sequence, read N- to C-terminus: Zinc finger protein unc-98 (308 aa).

2 consecutive C2H2-type zinc fingers follow at residues 111 to 133 (YKCRFCGLTFNFMNTLRAHERIH) and 139 to 161 (YVCGKCGESYEFACQLEYHAAQH). The C2H2-type 3; degenerate zinc finger occupies 166–186 (GFKCDCGRTFFSYTEMLYHKH). The C2H2-type 4 zinc-finger motif lies at 244–266 (YICEYCSKSYSDSRGLAYHMYSH).

The protein resides in the nucleus. Its subcellular location is the cytoplasm. Probable transcription factor. Required for muscle structure. Its dual subcellular localization suggests that it may function both as a muscle adhesion complex protein and as a transcription factor, or work together with transcription factors, to influence gene expression. Thought to act as a molecular bridge between unc-97 and mhc-a at the M-line of muscles, possibly in a signaling role. The polypeptide is Zinc finger protein unc-98 (Caenorhabditis briggsae).